Reading from the N-terminus, the 383-residue chain is 8-amino-7-oxononanoate synthase (383 aa).

Positions 27 and 34 each coordinate substrate. Pyridoxal 5'-phosphate is bound at residue 114–115 (GY). Position 139 (H139) interacts with substrate. Residues S187, 212 to 215 (DDAH), and 232 to 235 (TLSK) contribute to the pyridoxal 5'-phosphate site. K235 carries the N6-(pyridoxal phosphate)lysine modification. T344 is a binding site for substrate.

This sequence belongs to the class-II pyridoxal-phosphate-dependent aminotransferase family. BioF subfamily. As to quaternary structure, homodimer. Requires pyridoxal 5'-phosphate as cofactor.

The enzyme catalyses 6-carboxyhexanoyl-[ACP] + L-alanine + H(+) = (8S)-8-amino-7-oxononanoate + holo-[ACP] + CO2. Its pathway is cofactor biosynthesis; biotin biosynthesis. In terms of biological role, catalyzes the decarboxylative condensation of pimeloyl-[acyl-carrier protein] and L-alanine to produce 8-amino-7-oxononanoate (AON), [acyl-carrier protein], and carbon dioxide. This Methylorubrum extorquens (strain CM4 / NCIMB 13688) (Methylobacterium extorquens) protein is 8-amino-7-oxononanoate synthase.